The primary structure comprises 235 residues: Aspartate/glutamate leucyltransferase (235 aa).

This sequence belongs to the R-transferase family. Bpt subfamily.

The protein localises to the cytoplasm. The enzyme catalyses N-terminal L-glutamyl-[protein] + L-leucyl-tRNA(Leu) = N-terminal L-leucyl-L-glutamyl-[protein] + tRNA(Leu) + H(+). It carries out the reaction N-terminal L-aspartyl-[protein] + L-leucyl-tRNA(Leu) = N-terminal L-leucyl-L-aspartyl-[protein] + tRNA(Leu) + H(+). Functionally, functions in the N-end rule pathway of protein degradation where it conjugates Leu from its aminoacyl-tRNA to the N-termini of proteins containing an N-terminal aspartate or glutamate. The protein is Aspartate/glutamate leucyltransferase of Pseudomonas syringae pv. syringae (strain B728a).